The primary structure comprises 137 residues: uncharacterized protein (137 aa).

This is an uncharacterized protein from Frog virus 3 (isolate Goorha) (FV-3).